Here is a 399-residue protein sequence, read N- to C-terminus: L-asparaginase-like protein GE13669 (399 aa).

The signal sequence occupies residues 1-22; it reads MLAQSCCLRLLILLLLFKSTCS. 3 disulfides stabilise this stretch: cysteine 90–cysteine 95, cysteine 189–cysteine 205, and cysteine 344–cysteine 371.

Belongs to the Ntn-hydrolase family.

The chain is L-asparaginase-like protein GE13669 from Drosophila yakuba (Fruit fly).